The chain runs to 181 residues: Acetolactate synthase small subunit (181 aa).

An ACT domain is found at 4–78; sequence TLSVLVEDES…NVLKIQDITN (75 aa).

Belongs to the acetolactate synthase small subunit family. As to quaternary structure, dimer of large and small chains.

It localises to the plastid. The protein resides in the chloroplast. The catalysed reaction is 2 pyruvate + H(+) = (2S)-2-acetolactate + CO2. It functions in the pathway amino-acid biosynthesis; L-isoleucine biosynthesis; L-isoleucine from 2-oxobutanoate: step 1/4. It participates in amino-acid biosynthesis; L-valine biosynthesis; L-valine from pyruvate: step 1/4. This Galdieria sulphuraria (Red alga) protein is Acetolactate synthase small subunit (ilvH).